Reading from the N-terminus, the 337-residue chain is Phenylalanine--tRNA ligase alpha subunit (337 aa).

Glu-252 is a Mg(2+) binding site.

It belongs to the class-II aminoacyl-tRNA synthetase family. Phe-tRNA synthetase alpha subunit type 1 subfamily. In terms of assembly, tetramer of two alpha and two beta subunits. Requires Mg(2+) as cofactor.

It localises to the cytoplasm. It catalyses the reaction tRNA(Phe) + L-phenylalanine + ATP = L-phenylalanyl-tRNA(Phe) + AMP + diphosphate + H(+). The polypeptide is Phenylalanine--tRNA ligase alpha subunit (Francisella tularensis subsp. mediasiatica (strain FSC147)).